The sequence spans 535 residues: Glucan 1,6-alpha-glucosidase (535 aa).

Residue D194 is the Nucleophile of the active site. E236 (proton donor) is an active-site residue.

It belongs to the glycosyl hydrolase 13 family.

It is found in the cytoplasm. The catalysed reaction is Hydrolysis of (1-&gt;6)-alpha-D-glucosidic linkages in (1-&gt;6)-alpha-D-glucans and derived oligosaccharides.. In terms of biological role, the physiological substrates may be short isomaltosaccharides. In Streptococcus pneumoniae serotype 4 (strain ATCC BAA-334 / TIGR4), this protein is Glucan 1,6-alpha-glucosidase (dexB).